Reading from the N-terminus, the 176-residue chain is NAD(P)H-quinone oxidoreductase subunit 6, chloroplastic (176 aa).

5 helical membrane-spanning segments follow: residues 10 to 30 (ILVL…VLLT), 33 to 53 (IYSA…YFLL), 60 to 80 (VAQL…AVMF), 95 to 115 (IGDG…MTTI), and 152 to 172 (FYLP…GAIT).

Belongs to the complex I subunit 6 family. NDH is composed of at least 16 different subunits, 5 of which are encoded in the nucleus.

Its subcellular location is the plastid. It localises to the chloroplast thylakoid membrane. It carries out the reaction a plastoquinone + NADH + (n+1) H(+)(in) = a plastoquinol + NAD(+) + n H(+)(out). The enzyme catalyses a plastoquinone + NADPH + (n+1) H(+)(in) = a plastoquinol + NADP(+) + n H(+)(out). Its function is as follows. NDH shuttles electrons from NAD(P)H:plastoquinone, via FMN and iron-sulfur (Fe-S) centers, to quinones in the photosynthetic chain and possibly in a chloroplast respiratory chain. The immediate electron acceptor for the enzyme in this species is believed to be plastoquinone. Couples the redox reaction to proton translocation, and thus conserves the redox energy in a proton gradient. This Saccharum hybrid (Sugarcane) protein is NAD(P)H-quinone oxidoreductase subunit 6, chloroplastic (ndhG).